The chain runs to 430 residues: uncharacterized protein (430 aa).

2 consecutive transmembrane segments (helical) span residues 20 to 40 (YLCL…GIMP) and 405 to 425 (YIWW…LLVI).

Its subcellular location is the membrane. This is an uncharacterized protein from Schizosaccharomyces pombe (strain 972 / ATCC 24843) (Fission yeast).